We begin with the raw amino-acid sequence, 82 residues long: Small ribosomal subunit protein bS18 (82 aa).

This sequence belongs to the bacterial ribosomal protein bS18 family. As to quaternary structure, part of the 30S ribosomal subunit. Forms a tight heterodimer with protein bS6.

Functionally, binds as a heterodimer with protein bS6 to the central domain of the 16S rRNA, where it helps stabilize the platform of the 30S subunit. This is Small ribosomal subunit protein bS18 from Methylobacterium nodulans (strain LMG 21967 / CNCM I-2342 / ORS 2060).